The sequence spans 675 residues: DNA ligase (675 aa).

NAD(+)-binding positions include 34–38 (DYAFD), 83–84 (SL), and E117. K119 serves as the catalytic N6-AMP-lysine intermediate. 4 residues coordinate NAD(+): R140, E184, K297, and K321. Residues C415, C418, C433, and C439 each contribute to the Zn(2+) site. The BRCT domain occupies 598–675 (LVNRNFEGMK…GEEEFEAMLF (78 aa)).

It belongs to the NAD-dependent DNA ligase family. LigA subfamily. Mg(2+) is required as a cofactor. It depends on Mn(2+) as a cofactor.

It carries out the reaction NAD(+) + (deoxyribonucleotide)n-3'-hydroxyl + 5'-phospho-(deoxyribonucleotide)m = (deoxyribonucleotide)n+m + AMP + beta-nicotinamide D-nucleotide.. DNA ligase that catalyzes the formation of phosphodiester linkages between 5'-phosphoryl and 3'-hydroxyl groups in double-stranded DNA using NAD as a coenzyme and as the energy source for the reaction. It is essential for DNA replication and repair of damaged DNA. In Prosthecochloris aestuarii (strain DSM 271 / SK 413), this protein is DNA ligase.